The sequence spans 177 residues: Large ribosomal subunit protein uL6 (177 aa).

Belongs to the universal ribosomal protein uL6 family. As to quaternary structure, part of the 50S ribosomal subunit.

Functionally, this protein binds to the 23S rRNA, and is important in its secondary structure. It is located near the subunit interface in the base of the L7/L12 stalk, and near the tRNA binding site of the peptidyltransferase center. The chain is Large ribosomal subunit protein uL6 from Parvibaculum lavamentivorans (strain DS-1 / DSM 13023 / NCIMB 13966).